The chain runs to 245 residues: 1-(5-phosphoribosyl)-5-[(5-phosphoribosylamino)methylideneamino] imidazole-4-carboxamide isomerase (245 aa).

Asp8 (proton acceptor) is an active-site residue. Asp130 acts as the Proton donor in catalysis.

Belongs to the HisA/HisF family.

Its subcellular location is the cytoplasm. The catalysed reaction is 1-(5-phospho-beta-D-ribosyl)-5-[(5-phospho-beta-D-ribosylamino)methylideneamino]imidazole-4-carboxamide = 5-[(5-phospho-1-deoxy-D-ribulos-1-ylimino)methylamino]-1-(5-phospho-beta-D-ribosyl)imidazole-4-carboxamide. It participates in amino-acid biosynthesis; L-histidine biosynthesis; L-histidine from 5-phospho-alpha-D-ribose 1-diphosphate: step 4/9. The chain is 1-(5-phosphoribosyl)-5-[(5-phosphoribosylamino)methylideneamino] imidazole-4-carboxamide isomerase from Ectopseudomonas mendocina (strain ymp) (Pseudomonas mendocina).